Reading from the N-terminus, the 818-residue chain is Lon protease (818 aa).

Residues 14-216 (LPVLPLRDVV…KVFALIEREI (203 aa)) form the Lon N-terminal domain. 370-377 (GPPGVGKT) serves as a coordination point for ATP. Residues 605–786 (ESLVGIVTGL…DEVIKVALMH (182 aa)) form the Lon proteolytic domain. Active-site residues include S692 and K735.

The protein belongs to the peptidase S16 family. As to quaternary structure, homohexamer. Organized in a ring with a central cavity.

The protein resides in the cytoplasm. The catalysed reaction is Hydrolysis of proteins in presence of ATP.. Functionally, ATP-dependent serine protease that mediates the selective degradation of mutant and abnormal proteins as well as certain short-lived regulatory proteins. Required for cellular homeostasis and for survival from DNA damage and developmental changes induced by stress. Degrades polypeptides processively to yield small peptide fragments that are 5 to 10 amino acids long. Binds to DNA in a double-stranded, site-specific manner. The polypeptide is Lon protease (Wolbachia pipientis subsp. Culex pipiens (strain wPip)).